Consider the following 212-residue polypeptide: N-(5'-phosphoribosyl)anthranilate isomerase (212 aa).

Belongs to the TrpF family.

The catalysed reaction is N-(5-phospho-beta-D-ribosyl)anthranilate = 1-(2-carboxyphenylamino)-1-deoxy-D-ribulose 5-phosphate. It participates in amino-acid biosynthesis; L-tryptophan biosynthesis; L-tryptophan from chorismate: step 3/5. This is N-(5'-phosphoribosyl)anthranilate isomerase from Cereibacter sphaeroides (strain ATCC 17029 / ATH 2.4.9) (Rhodobacter sphaeroides).